Here is a 342-residue protein sequence, read N- to C-terminus: Protein-glutamate methylesterase/protein-glutamine glutaminase 1 (342 aa).

The 118-residue stretch at 2 to 119 folds into the Response regulatory domain; the sequence is RVAIVNDMPL…GDPKAAAQRL (118 aa). Residue Asp53 is modified to 4-aspartylphosphate. One can recognise a CheB-type methylesterase domain in the interval 146–329; the sequence is SDTDAALVVI…LPLGDIAPRL (184 aa). Active-site residues include Ser158, His185, and Asp278.

It belongs to the CheB family. In terms of processing, phosphorylated by CheA. Phosphorylation of the N-terminal regulatory domain activates the methylesterase activity.

It localises to the cytoplasm. It catalyses the reaction [protein]-L-glutamate 5-O-methyl ester + H2O = L-glutamyl-[protein] + methanol + H(+). The catalysed reaction is L-glutaminyl-[protein] + H2O = L-glutamyl-[protein] + NH4(+). In terms of biological role, involved in chemotaxis. Part of a chemotaxis signal transduction system that modulates chemotaxis in response to various stimuli. Catalyzes the demethylation of specific methylglutamate residues introduced into the chemoreceptors (methyl-accepting chemotaxis proteins or MCP) by CheR. Also mediates the irreversible deamidation of specific glutamine residues to glutamic acid. This chain is Protein-glutamate methylesterase/protein-glutamine glutaminase 1, found in Bordetella avium (strain 197N).